Here is a 330-residue protein sequence, read N- to C-terminus: Ketol-acid reductoisomerase (NADP(+)) (330 aa).

The 181-residue stretch at 1–181 folds into the KARI N-terminal Rossmann domain; sequence MKVFYDSDFK…GLSRAGVIQT (181 aa). Residues 24 to 27, arginine 47, serine 52, and 82 to 85 contribute to the NADP(+) site; these read YGSQ and DELQ. Histidine 107 is a catalytic residue. Glycine 133 serves as a coordination point for NADP(+). A KARI C-terminal knotted domain is found at 182–327; sequence TFKEETETDL…AKLRKMCGLE (146 aa). 4 residues coordinate Mg(2+): aspartate 190, glutamate 194, glutamate 226, and glutamate 230. A substrate-binding site is contributed by serine 251.

Belongs to the ketol-acid reductoisomerase family. The cofactor is Mg(2+).

The enzyme catalyses (2R)-2,3-dihydroxy-3-methylbutanoate + NADP(+) = (2S)-2-acetolactate + NADPH + H(+). The catalysed reaction is (2R,3R)-2,3-dihydroxy-3-methylpentanoate + NADP(+) = (S)-2-ethyl-2-hydroxy-3-oxobutanoate + NADPH + H(+). It participates in amino-acid biosynthesis; L-isoleucine biosynthesis; L-isoleucine from 2-oxobutanoate: step 2/4. Its pathway is amino-acid biosynthesis; L-valine biosynthesis; L-valine from pyruvate: step 2/4. In terms of biological role, involved in the biosynthesis of branched-chain amino acids (BCAA). Catalyzes an alkyl-migration followed by a ketol-acid reduction of (S)-2-acetolactate (S2AL) to yield (R)-2,3-dihydroxy-isovalerate. In the isomerase reaction, S2AL is rearranged via a Mg-dependent methyl migration to produce 3-hydroxy-3-methyl-2-ketobutyrate (HMKB). In the reductase reaction, this 2-ketoacid undergoes a metal-dependent reduction by NADPH to yield (R)-2,3-dihydroxy-isovalerate. This Methanococcus maripaludis (strain C6 / ATCC BAA-1332) protein is Ketol-acid reductoisomerase (NADP(+)).